Here is a 155-residue protein sequence, read N- to C-terminus: FUN14 domain-containing protein 1 (155 aa).

Over 1 to 47 (MASRNPPPQDYESDDESYEVLDLTEYARRHHWWNRVFGHSSGPMVEK) the chain is Cytoplasmic. Phosphoserine is present on residues serine 13 and serine 17. Tyrosine 18 is modified (phosphotyrosine; by SRC). The short motif at 18 to 21 (YEVL) is the YXXL element. A helical membrane pass occupies residues 48–68 (YSVATQIVMGGVTGWCAGFLF). Residues 69–74 (QKVGKL) lie on the Mitochondrial intermembrane side of the membrane. A helical membrane pass occupies residues 75–95 (AATAVGGGFLLLQVASHSGYV). Over 96-133 (QIDWKRVEKDVNKAKRQIKKRANKAAPEINNIIEEATD) the chain is Cytoplasmic. Residue lysine 119 forms a Glycyl lysine isopeptide (Lys-Gly) (interchain with G-Cter in ubiquitin) linkage. The chain crosses the membrane as a helical span at residues 134-154 (FIKQNIVISSGFVGGFLLGLA). Residue serine 155 is a topological domain, mitochondrial intermembrane.

Belongs to the FUN14 family. Interacts (via YXXL motif) with MAP1 LC3 family proteins MAP1LC3A, MAP1LC3B and GABARAP. Interacts with DNM1L/DPR1. Interacts with GPX4. Post-translationally, phosphorylation at Ser-13 by CK2 and at Tyr-18 by SRC inhibits activation of mitophagy. Following hypoxia, dephosphorylated at Tyr-18, leading to interaction with MAP1 LC3 family proteins and triggering mitophagy. Dephosphorylation is mediated by PGAM5. Phosphorylated by ULK1 at Ser-17 which enhances FUNDC1 binding to LC3. Ubiquitinated on Lys-119. Deubiquitinated by USP19; leading to hypoxia-induced DRP1 oligomerization and GTPase activity.

The protein resides in the mitochondrion outer membrane. In terms of biological role, integral mitochondrial outer-membrane protein that mediates the formation of mitochondria-associated endoplasmic reticulum membranes (MAMs). In turn, mediates angiogenesis and neoangiogenesis through interference with intracellular Ca(2+) communication and regulation of the vascular endothelial growth factor receptor KDR/VEGFR2 expression at both mRNA and protein levels. Also acts as an activator of hypoxia-induced mitophagy, an important mechanism for mitochondrial quality and homeostasis, by interacting with and recruiting LC3 protein family to mitochondria. Mechanistically, recruits DRP1 at ER-mitochondria contact sites leading to DRP1 oligomerization and GTPase activity to facilitate mitochondrial fission during hypoxia. Additionally, plays a role in hepatic ferroptosis by interacting directly with glutathione peroxidase/GPX4 to facilitate its recruitment into mitochondria through TOM/TIM complex where it is degraded by mitophagy. The polypeptide is FUN14 domain-containing protein 1 (Fundc1) (Mus musculus (Mouse)).